Consider the following 687-residue polypeptide: Ataxin-1-like (687 aa).

Residues 1 to 19 (MKPVHERSQECLPPKKRDL) are compositionally biased toward basic and acidic residues. Disordered stretches follow at residues 1 to 46 (MKPV…SEWS), 185 to 223 (ATPPPQAASPAQSFNKSSSATSPPGQLPHHSNTQPLDLA), and 261 to 294 (SALEAAAANGQRQRERNVRRESEALDSASSKGES). Residues 20–197 (PVTSEDMGRT…PPQAASPAQS (178 aa)) form an interaction with NCOR2 and ATXN1 region. Positions 20 to 197 (PVTSEDMGRT…PPQAASPAQS (178 aa)) are self-association. Composition is skewed to polar residues over residues 28–43 (RTTSCSTNHTPSSDAS) and 198–219 (FNKSSSATSPPGQLPHHSNTQP). Residues 272 to 283 (RQRERNVRRESE) show a composition bias toward basic and acidic residues. Residue Ser282 is modified to Phosphoserine. Thr328 is subject to Phosphothreonine. The disordered stretch occupies residues 356–379 (DEPSPLNLSHHNLDHQGEGRGSAR). The residue at position 359 (Ser359) is a Phosphoserine. The AXH domain occupies 455–586 (PPPVTSSHLP…SISLQSLNSN (132 aa)). The segment at 587–649 (SVSQASCAPP…PGAQACWPAP (63 aa)) is disordered.

It belongs to the ATXN1 family. As to quaternary structure, homodimer. Interacts (via AXH domain) with NCOR2. Interacts with ATXN1 and CIC. Directly interacts with RBPJ; this interaction is disrupted in the presence of Notch intracellular domain. Competes with ATXN1 for RBPJ-binding. Found in a complex with CIC and ATXN1. As to expression, expressed in the cortex and hypothalamus (at protein level). Expressed in neuronal cells. Highly expressed in Purkinje cells of cerebellum.

It localises to the nucleus. It is found in the cell projection. The protein resides in the dendrite. Functionally, chromatin-binding factor that repress Notch signaling in the absence of Notch intracellular domain by acting as a CBF1 corepressor. Binds to the HEY promoter and might assist, along with NCOR2, RBPJ-mediated repression. Can suppress the cytotoxicity of ATXN1 in spinocerebellar ataxia type 1 (SCA1). In concert with CIC and ATXN1, involved in brain development. This is Ataxin-1-like (Atxn1l) from Mus musculus (Mouse).